The chain runs to 206 residues: ATP-dependent Clp protease proteolytic subunit 2 (206 aa).

Catalysis depends on S100, which acts as the Nucleophile. H125 is a catalytic residue.

It belongs to the peptidase S14 family. In terms of assembly, fourteen ClpP subunits assemble into 2 heptameric rings which stack back to back to give a disk-like structure with a central cavity, resembling the structure of eukaryotic proteasomes.

The protein resides in the cytoplasm. It catalyses the reaction Hydrolysis of proteins to small peptides in the presence of ATP and magnesium. alpha-casein is the usual test substrate. In the absence of ATP, only oligopeptides shorter than five residues are hydrolyzed (such as succinyl-Leu-Tyr-|-NHMec, and Leu-Tyr-Leu-|-Tyr-Trp, in which cleavage of the -Tyr-|-Leu- and -Tyr-|-Trp bonds also occurs).. Functionally, cleaves peptides in various proteins in a process that requires ATP hydrolysis. Has a chymotrypsin-like activity. Plays a major role in the degradation of misfolded proteins. This Myxococcus xanthus protein is ATP-dependent Clp protease proteolytic subunit 2.